The primary structure comprises 238 residues: N-(5'-phosphoribosyl)anthranilate isomerase (238 aa).

It belongs to the TrpF family.

The catalysed reaction is N-(5-phospho-beta-D-ribosyl)anthranilate = 1-(2-carboxyphenylamino)-1-deoxy-D-ribulose 5-phosphate. Its pathway is amino-acid biosynthesis; L-tryptophan biosynthesis; L-tryptophan from chorismate: step 3/5. This chain is N-(5'-phosphoribosyl)anthranilate isomerase, found in Methanosarcina acetivorans (strain ATCC 35395 / DSM 2834 / JCM 12185 / C2A).